We begin with the raw amino-acid sequence, 404 residues long: MKLPIYLDYAATTPVDPRVAEKMMQHMTMDGVFGNPASRSHRYGWQAEEAVDVARNQVADLINADHREIVFTSGATESSNLAIKGIAHFYHKKGKHIITSKTEHKATLDTCRQLEREGYEVTYLVPDANGIIPMERLEAAMRDDTILVSIMHVNNEIGVIHDINAIGELCRSKGIFFHMDAAQSAGKIPIDVQTTKVDLISISGHKMYGPKGIGALYVRRKPRIRLESQMHGGGHERGMRSGTLATHQIVGLGEAAAVAKQDMAADSARITHLRDKLWNGIKHIEETYINGDMEQRYSGIFNVSFNFVEGESLMMALKDLAVSSGSACTSASLEPSYVLRALGLNDEMAHSSIRFSIGRFTTDEEIDHAIKTITESIDKLREMSPLWEMFKDGIDLEQVQWAHH.

Pyridoxal 5'-phosphate is bound by residues 75–76, asparagine 155, glutamine 183, and 203–205; these read AT and SGH. At lysine 206 the chain carries N6-(pyridoxal phosphate)lysine. Residue threonine 243 participates in pyridoxal 5'-phosphate binding. Catalysis depends on cysteine 328, which acts as the Cysteine persulfide intermediate. Cysteine 328 serves as a coordination point for [2Fe-2S] cluster.

It belongs to the class-V pyridoxal-phosphate-dependent aminotransferase family. NifS/IscS subfamily. As to quaternary structure, homodimer. Forms a heterotetramer with IscU, interacts with other sulfur acceptors. The cofactor is pyridoxal 5'-phosphate.

It localises to the cytoplasm. The catalysed reaction is (sulfur carrier)-H + L-cysteine = (sulfur carrier)-SH + L-alanine. It functions in the pathway cofactor biosynthesis; iron-sulfur cluster biosynthesis. Master enzyme that delivers sulfur to a number of partners involved in Fe-S cluster assembly, tRNA modification or cofactor biosynthesis. Catalyzes the removal of elemental sulfur atoms from cysteine to produce alanine. Functions as a sulfur delivery protein for Fe-S cluster synthesis onto IscU, an Fe-S scaffold assembly protein, as well as other S acceptor proteins. The sequence is that of Cysteine desulfurase IscS from Shewanella frigidimarina (strain NCIMB 400).